Consider the following 559-residue polypeptide: Endoglin (559 aa).

The signal sequence occupies residues 1–20 (MKSICCVLVLCLLLCRRSTA). The Extracellular portion of the chain corresponds to 21–473 (SESICELKDV…SCFEFGLSAV (453 aa)). Intrachain disulfides connect Cys-25–Cys-201 and Cys-47–Cys-174. Asn-55, Asn-79, Asn-109, Asn-133, Asn-170, Asn-302, and Asn-352 each carry an N-linked (GlcNAc...) asparagine glycan. An intrachain disulfide couples Cys-381 to Cys-427. Residues 474–494 (LGIAFGGFLIGVLLTGALWFI) form a helical membrane-spanning segment. Residues 495 to 559 (KIRTGHPVAL…TQSTPTSSMA (65 aa)) lie on the Cytoplasmic side of the membrane. Positions 528-559 (RQPVPTHPSPSENSSANASIGSTQSTPTSSMA) are disordered. Over residues 536–546 (SPSENSSANAS) the composition is skewed to low complexity. Positions 547–559 (IGSTQSTPTSSMA) are enriched in polar residues.

Homodimer; disulfide-linked.

Its subcellular location is the cell membrane. Its function is as follows. Vascular endothelium glycoprotein that plays an important role in the regulation of angiogenesis. Required for normal structure and integrity of adult vasculature. Important for endothelial cell shape changes in response to blood flow, which drive vascular remodeling and establishment of normal vascular morphology during angiogenesis. This Danio rerio (Zebrafish) protein is Endoglin.